Here is a 146-residue protein sequence, read N- to C-terminus: Small ribosomal subunit protein uS9z (146 aa).

This sequence belongs to the universal ribosomal protein uS9 family.

The sequence is that of Small ribosomal subunit protein uS9z (RPS16A) from Arabidopsis thaliana (Mouse-ear cress).